Here is a 205-residue protein sequence, read N- to C-terminus: ATP synthase subunit b 1 (205 aa).

The span at methionine 1–glutamine 15 shows a compositional bias: polar residues. A disordered region spans residues methionine 1 to alanine 26. The segment covering proline 16–alanine 26 has biased composition (low complexity). Residues serine 56 to proline 78 traverse the membrane as a helical segment.

The protein belongs to the ATPase B chain family. F-type ATPases have 2 components, F(1) - the catalytic core - and F(0) - the membrane proton channel. F(1) has five subunits: alpha(3), beta(3), gamma(1), delta(1), epsilon(1). F(0) has three main subunits: a(1), b(2) and c(10-14). The alpha and beta chains form an alternating ring which encloses part of the gamma chain. F(1) is attached to F(0) by a central stalk formed by the gamma and epsilon chains, while a peripheral stalk is formed by the delta and b chains.

It localises to the cell inner membrane. In terms of biological role, f(1)F(0) ATP synthase produces ATP from ADP in the presence of a proton or sodium gradient. F-type ATPases consist of two structural domains, F(1) containing the extramembraneous catalytic core and F(0) containing the membrane proton channel, linked together by a central stalk and a peripheral stalk. During catalysis, ATP synthesis in the catalytic domain of F(1) is coupled via a rotary mechanism of the central stalk subunits to proton translocation. Its function is as follows. Component of the F(0) channel, it forms part of the peripheral stalk, linking F(1) to F(0). In Brucella anthropi (strain ATCC 49188 / DSM 6882 / CCUG 24695 / JCM 21032 / LMG 3331 / NBRC 15819 / NCTC 12168 / Alc 37) (Ochrobactrum anthropi), this protein is ATP synthase subunit b 1.